The chain runs to 892 residues: Alpha-actinin-1 (892 aa).

Residue Met-1 is modified to N-acetylmethionine. Positions 1–247 are actin-binding; it reads MDHYDSQQTN…IMTYVSSFYH (247 aa). At Ser-6 the chain carries Phosphoserine. Residue Tyr-12 is modified to Phosphotyrosine; by FAK1. Calponin-homology (CH) domains are found at residues 31 to 135 and 144 to 250; these read KQQR…LRFA and TSAK…HAFS. Residues Lys-95 and Lys-195 each carry the N6-acetyllysine modification. Spectrin repeat units follow at residues 274–384, 394–499, 509–620, and 630–733; these read QLME…WLLN, HLAE…ALER, QLYL…ALTE, and RLRK…EVEN. Residues 274 to 733 form an interaction with DDN region; it reads QLMEDYEKLA…IARTINEVEN (460 aa). Ser-471 is modified (phosphoserine). Lys-676 carries the N6-acetyllysine modification. Position 677 is a phosphoserine (Ser-677). 2 EF-hand domains span residues 746 to 781 and 787 to 822; these read EQMN…LGYD and QGEA…ETAD. 5 residues coordinate Ca(2+): Asp-759, Asp-761, Ser-763, Thr-765, and Glu-770. Phosphoserine is present on Ser-890.

The protein belongs to the alpha-actinin family. Homodimer; antiparallel. Interacts with MYOZ2, TTID and LPP. Interacts with DDN. Interacts with PSD. Interacts with MICALL2. Interacts with DNM2 and CTTN. Interacts with PDLIM1. Interacts with PDLIM2. Interacts with PDLIM4 (via PDZ domain). Interacts with IGSF8.

It is found in the cytoplasm. Its subcellular location is the cytoskeleton. The protein resides in the myofibril. It localises to the sarcomere. The protein localises to the z line. It is found in the cell membrane. Its subcellular location is the cell junction. The protein resides in the cell projection. It localises to the ruffle. Functionally, F-actin cross-linking protein which is thought to anchor actin to a variety of intracellular structures. Association with IGSF8 regulates the immune synapse formation and is required for efficient T-cell activation. In Mus musculus (Mouse), this protein is Alpha-actinin-1 (Actn1).